Consider the following 377-residue polypeptide: Guanine nucleotide-binding protein subunit beta-2 (377 aa).

WD repeat units follow at residues 63–93, 105–135, 154–185, 202–233, 246–276, 293–323, and 339–369; these read GHTG…IVWN, LPCA…SIFN, GHKG…VLWD, GHTA…RLWD, GHEG…RLFD, GDIP…YVWD, and SHEG…KIWA.

This sequence belongs to the WD repeat G protein beta family. G proteins are composed of 3 units, alpha, beta and gamma.

Functionally, guanine nucleotide-binding proteins (G proteins) are involved as a modulator or transducer in various transmembrane signaling systems. The beta and gamma chains are required for the GTPase activity, for replacement of GDP by GTP, and for G protein-effector interaction. The chain is Guanine nucleotide-binding protein subunit beta-2 from Nicotiana tabacum (Common tobacco).